The primary structure comprises 358 residues: MNSTESIPLAQSTVAGFTSELESLTPVPSNETTCENWREIHHLVFHVANVCFAVGLLIPTTLHLHMILLRVMLSLGCTLYVVWATLYRCALDVMIWNSVFLGINILHLSYLLYKKRPVKIEKELGGVYHRLFEPLRVPPDLFRRLTGQFCMIQTLKRGQVYATEDKTSVDDRLSILLKGRMKVSYRGHFLHNIYPCAFIDSPEFRSTQMHKGEKFQVTIVADDNCRFLCWSRERLTYFLESEPFLYEIFRYLIGKDITNKLYSLNDPTLNDKKVKKLEPQMSLCTQISMLEMRNSITSSSDGEDGLHHFLRGSSSTASLPMSSPQQRASAKMKPIEEGVEDDDEVFVSPDALKVHQLP.

At 1 to 48 (MNSTESIPLAQSTVAGFTSELESLTPVPSNETTCENWREIHHLVFHVA) the chain is on the extracellular side. N-linked (GlcNAc...) asparagine glycosylation is found at N2 and N30. A helical transmembrane segment spans residues 49 to 69 (NVCFAVGLLIPTTLHLHMILL). A topological domain (cytoplasmic) is located at residue R70. Residues 71–91 (VMLSLGCTLYVVWATLYRCAL) form a helical membrane-spanning segment. A topological domain (extracellular) is located at residue D92. The chain crosses the membrane as a helical span at residues 93–113 (VMIWNSVFLGINILHLSYLLY). Positions 93-115 (VMIWNSVFLGINILHLSYLLYKK) are required for interaction with CAV3. Over 114-358 (KKRPVKIEKE…PDALKVHQLP (245 aa)) the chain is Cytoplasmic. Residues 136 to 186 (RVPPDLFRRLTGQFCMIQTLKRGQVYATEDKTSVDDRLSILLKGRMKVSYR) form a required for interaction with KCNK2 region. Phosphoserine is present on residues S295 and S318. Positions 313 to 323 (SSSTASLPMSS) are enriched in low complexity. Residues 313 to 350 (SSSTASLPMSSPQQRASAKMKPIEEGVEDDDEVFVSPD) are disordered.

This sequence belongs to the popeye family. As to quaternary structure, homodimer. Homodimerization requires the C-terminus cytoplasmic region. Interacts (via the C-terminus cytoplasmic tail) with TJP1. Interacts (via the C-terminus cytoplasmic tail) with ARHGEF25/GEFT (via the DH domain). Interacts (via the C-terminus cytoplasmic tail) with VAMP3. Interacts with KCNK2; the interaction enhances KCNK2 surface expression and is inhibited by cAMP. Interacts with CAV3. In terms of tissue distribution, expressed in epithelial cells, skeletal muscle, heart and intestinal smooth muscle (at protein level). Expressed in fetal and adult heart and skeletal muscle.

The protein resides in the lateral cell membrane. It is found in the cell junction. The protein localises to the tight junction. It localises to the membrane. Its subcellular location is the cell membrane. The protein resides in the sarcolemma. It is found in the caveola. Cell adhesion molecule involved in the establishment and/or maintenance of cell integrity. Involved in the formation and regulation of the tight junction (TJ) paracellular permeability barrier in epithelial cells. Plays a role in VAMP3-mediated vesicular transport and recycling of different receptor molecules through its interaction with VAMP3. Plays a role in the regulation of cell shape and movement by modulating the Rho-family GTPase activity through its interaction with ARHGEF25/GEFT. Induces primordial adhesive contact and aggregation of epithelial cells in a Ca(2+)-independent manner. Also involved in striated muscle regeneration and repair and in the regulation of cell spreading. Important for the maintenance of cardiac function. Plays a regulatory function in heart rate dynamics mediated, at least in part, through cAMP-binding and, probably, by increasing cell surface expression of the potassium channel KCNK2 and enhancing current density. Is a caveolae-associated protein important for the preservation of caveolae structural and functional integrity as well as for heart protection against ischemia injury. This is Popeye domain-containing protein 1 from Mus musculus (Mouse).